The following is an 86-amino-acid chain: Small ribosomal subunit protein bS16 (86 aa).

It belongs to the bacterial ribosomal protein bS16 family.

This is Small ribosomal subunit protein bS16 from Nostoc punctiforme (strain ATCC 29133 / PCC 73102).